The primary structure comprises 188 residues: Peptidyl-tRNA hydrolase (188 aa).

Phe-15 lines the tRNA pocket. Catalysis depends on His-20, which acts as the Proton acceptor. Tyr-64, Asn-66, and Asn-112 together coordinate tRNA.

This sequence belongs to the PTH family. Monomer.

The protein resides in the cytoplasm. The enzyme catalyses an N-acyl-L-alpha-aminoacyl-tRNA + H2O = an N-acyl-L-amino acid + a tRNA + H(+). Hydrolyzes ribosome-free peptidyl-tRNAs (with 1 or more amino acids incorporated), which drop off the ribosome during protein synthesis, or as a result of ribosome stalling. In terms of biological role, catalyzes the release of premature peptidyl moieties from peptidyl-tRNA molecules trapped in stalled 50S ribosomal subunits, and thus maintains levels of free tRNAs and 50S ribosomes. The sequence is that of Peptidyl-tRNA hydrolase from Borrelia recurrentis (strain A1).